A 382-amino-acid polypeptide reads, in one-letter code: Alkanesulfonate monooxygenase (382 aa).

The protein belongs to the SsuD family.

It carries out the reaction an alkanesulfonate + FMNH2 + O2 = an aldehyde + FMN + sulfite + H2O + 2 H(+). Its function is as follows. Catalyzes the desulfonation of aliphatic sulfonates. The polypeptide is Alkanesulfonate monooxygenase (Pseudomonas putida (strain W619)).